The primary structure comprises 276 residues: Urease accessory protein UreD (276 aa).

This sequence belongs to the UreD family. UreD, UreF and UreG form a complex that acts as a GTP-hydrolysis-dependent molecular chaperone, activating the urease apoprotein by helping to assemble the nickel containing metallocenter of UreC. The UreE protein probably delivers the nickel.

It is found in the cytoplasm. In terms of biological role, required for maturation of urease via the functional incorporation of the urease nickel metallocenter. This is Urease accessory protein UreD from Variovorax paradoxus (strain S110).